A 116-amino-acid polypeptide reads, in one-letter code: U16-barytoxin-Tl1d (116 aa).

The first 20 residues, 1-20, serve as a signal peptide directing secretion; sequence MKTIIVFLSLLVLATKFGDA. Positions 21 to 74 are excised as a propeptide; it reads NEGVNQEQMKEVIQNEFREDFLNEMAAMSLLQQLEAIESTLLEKEADRNSRQKR. Disulfide bonds link Cys-75/Cys-90, Cys-82/Cys-95, and Cys-89/Cys-110.

This sequence belongs to the neurotoxin 14 (magi-1) family. 06 (ICK-Trit) subfamily. As to expression, expressed by the venom gland.

It is found in the secreted. Its function is as follows. Ion channel inhibitor. This Trittame loki (Brush-footed trapdoor spider) protein is U16-barytoxin-Tl1d.